Reading from the N-terminus, the 260-residue chain is tRNA pseudouridine synthase A (260 aa).

Catalysis depends on D52, which acts as the Nucleophile. Y110 lines the substrate pocket.

The protein belongs to the tRNA pseudouridine synthase TruA family. In terms of assembly, homodimer.

It catalyses the reaction uridine(38/39/40) in tRNA = pseudouridine(38/39/40) in tRNA. Functionally, formation of pseudouridine at positions 38, 39 and 40 in the anticodon stem and loop of transfer RNAs. This chain is tRNA pseudouridine synthase A, found in Spiroplasma kunkelii.